Consider the following 217-residue polypeptide: Large ribosomal subunit protein uL1 (217 aa).

Belongs to the universal ribosomal protein uL1 family.

This is Large ribosomal subunit protein uL1 (RpL10A) from Spodoptera frugiperda (Fall armyworm).